The following is a 95-amino-acid chain: Aspartyl/glutamyl-tRNA(Asn/Gln) amidotransferase subunit C (95 aa).

This sequence belongs to the GatC family. In terms of assembly, heterotrimer of A, B and C subunits.

It carries out the reaction L-glutamyl-tRNA(Gln) + L-glutamine + ATP + H2O = L-glutaminyl-tRNA(Gln) + L-glutamate + ADP + phosphate + H(+). The catalysed reaction is L-aspartyl-tRNA(Asn) + L-glutamine + ATP + H2O = L-asparaginyl-tRNA(Asn) + L-glutamate + ADP + phosphate + 2 H(+). Functionally, allows the formation of correctly charged Asn-tRNA(Asn) or Gln-tRNA(Gln) through the transamidation of misacylated Asp-tRNA(Asn) or Glu-tRNA(Gln) in organisms which lack either or both of asparaginyl-tRNA or glutaminyl-tRNA synthetases. The reaction takes place in the presence of glutamine and ATP through an activated phospho-Asp-tRNA(Asn) or phospho-Glu-tRNA(Gln). The protein is Aspartyl/glutamyl-tRNA(Asn/Gln) amidotransferase subunit C of Azorhizobium caulinodans (strain ATCC 43989 / DSM 5975 / JCM 20966 / LMG 6465 / NBRC 14845 / NCIMB 13405 / ORS 571).